Consider the following 325-residue polypeptide: Heme A synthase (325 aa).

5 helical membrane-spanning segments follow: residues 6-26, 88-108, 116-136, 155-175, and 184-204; these read WLAVCILLILSMVSIGGFTRL, LVGRILGLVFFIGLVYFFVVG, LRLCFALVLGVIQGFVGWYMV, LFCASLLFMVLVYEFLSPTVI, and LVGCSLMFLLSMQIILGGLVA. Position 246 (His-246) interacts with heme. 3 helical membrane passes run 248–268, 275–295, and 297–317; these read MSAFLLTFICLVCLVISFFYD, VFLVASMMLLQMFFGVLTLLF, and IPIDIALLHQIMAFILLGICV. His-305 provides a ligand contact to heme.

It belongs to the COX15/CtaA family. Type 2 subfamily. Interacts with CtaB. The cofactor is heme b.

It is found in the cell membrane. The catalysed reaction is Fe(II)-heme o + 2 A + H2O = Fe(II)-heme a + 2 AH2. Its pathway is porphyrin-containing compound metabolism; heme A biosynthesis; heme A from heme O: step 1/1. Catalyzes the conversion of heme O to heme A by two successive hydroxylations of the methyl group at C8. The first hydroxylation forms heme I, the second hydroxylation results in an unstable dihydroxymethyl group, which spontaneously dehydrates, resulting in the formyl group of heme A. The sequence is that of Heme A synthase from Neorickettsia sennetsu (strain ATCC VR-367 / Miyayama) (Ehrlichia sennetsu).